Reading from the N-terminus, the 495-residue chain is tRNA modification GTPase MnmE (495 aa).

R28, E89, and K128 together coordinate (6S)-5-formyl-5,6,7,8-tetrahydrofolate. Positions 223–417 (GVRIVLGGCP…LRAQTLHLLH (195 aa)) constitute a TrmE-type G domain. K(+) is bound at residue N233. GTP-binding positions include 233-238 (NAGKSS), 252-258 (SSVPGTT), and 277-280 (DTAG). S237 is a Mg(2+) binding site. Residues S252, V254, and T257 each coordinate K(+). A Mg(2+)-binding site is contributed by T258. (6S)-5-formyl-5,6,7,8-tetrahydrofolate is bound at residue K495.

This sequence belongs to the TRAFAC class TrmE-Era-EngA-EngB-Septin-like GTPase superfamily. TrmE GTPase family. In terms of assembly, homodimer. Heterotetramer of two MnmE and two MnmG subunits. K(+) is required as a cofactor.

It is found in the cytoplasm. Exhibits a very high intrinsic GTPase hydrolysis rate. Involved in the addition of a carboxymethylaminomethyl (cmnm) group at the wobble position (U34) of certain tRNAs, forming tRNA-cmnm(5)s(2)U34. In Treponema pallidum (strain Nichols), this protein is tRNA modification GTPase MnmE.